We begin with the raw amino-acid sequence, 309 residues long: Tumor necrosis factor ligand superfamily member 9 (309 aa).

The span at 1 to 16 (MDQHTLDVEDTADARH) shows a compositional bias: basic and acidic residues. Residues 1–20 (MDQHTLDVEDTADARHPAGT) are disordered. Over 1-82 (MDQHTLDVED…ALNFCSRHPK (82 aa)) the chain is Cytoplasmic. A helical; Signal-anchor for type II membrane protein transmembrane segment spans residues 83–103 (LYGLVALVLLLLIAACVPIFT). Over 104–309 (RTEPRPALTI…FLVKPDNPWE (206 aa)) the chain is Extracellular. N-linked (GlcNAc...) asparagine glycans are attached at residues N139, N161, and N293. Residues 147–302 (VFAKLLAKNQ…NTTSFGLFLV (156 aa)) form the THD domain.

It belongs to the tumor necrosis factor family. As to quaternary structure, homotrimer.

Its subcellular location is the membrane. Its function is as follows. Cytokine that binds to TNFRSF9. Induces the proliferation of activated peripheral blood T-cells. May have a role in activation-induced cell death (AICD). May play a role in cognate interactions between T-cells and B-cells/macrophages. The polypeptide is Tumor necrosis factor ligand superfamily member 9 (Tnfsf9) (Mus musculus (Mouse)).